The following is a 251-amino-acid chain: DNA repair protein RecO (251 aa).

This sequence belongs to the RecO family.

Its function is as follows. Involved in DNA repair and RecF pathway recombination. The protein is DNA repair protein RecO of Nitratidesulfovibrio vulgaris (strain ATCC 29579 / DSM 644 / CCUG 34227 / NCIMB 8303 / VKM B-1760 / Hildenborough) (Desulfovibrio vulgaris).